Here is a 179-residue protein sequence, read N- to C-terminus: Large ribosomal subunit protein uL5 (179 aa).

Belongs to the universal ribosomal protein uL5 family. As to quaternary structure, part of the 50S ribosomal subunit; part of the 5S rRNA/L5/L18/L25 subcomplex. Contacts the 5S rRNA and the P site tRNA. Forms a bridge to the 30S subunit in the 70S ribosome.

Functionally, this is one of the proteins that bind and probably mediate the attachment of the 5S RNA into the large ribosomal subunit, where it forms part of the central protuberance. In the 70S ribosome it contacts protein S13 of the 30S subunit (bridge B1b), connecting the 2 subunits; this bridge is implicated in subunit movement. Contacts the P site tRNA; the 5S rRNA and some of its associated proteins might help stabilize positioning of ribosome-bound tRNAs. This is Large ribosomal subunit protein uL5 from Janthinobacterium sp. (strain Marseille) (Minibacterium massiliensis).